Consider the following 629-residue polypeptide: Sushi domain-containing protein 5 (629 aa).

The signal sequence occupies residues 1-35; that stretch reads MTAEGPSPPARWHRRLPGLWAAALLLLGLPRLSVR. Residues 36–574 are Extracellular-facing; it reads ADGKFFVLES…DGCPGLSRGP (539 aa). The Link domain maps to 39–134; that stretch reads KFFVLESQNG…GGTYSALCIK (96 aa). 3 disulfide bridges follow: Cys-61–Cys-132, Cys-140–Cys-184, and Cys-167–Cys-197. Residues 138-199 form the Sushi domain; that stretch reads KPCGDPPSFP…WYGLVQACGK (62 aa). A compositionally biased stretch (basic and acidic residues) spans 225–249; that stretch reads EDSRTEADEDRGQGDSSEEAPKQDR. 2 disordered regions span residues 225 to 252 and 344 to 403; these read EDSRTEADEDRGQGDSSEEAPKQDRLVS and DGPS…GLDE. Residues 575–595 form a helical membrane-spanning segment; the sequence is VIATIVTVLCLLLLLAGVGMV. Residues 596–629 are Cytoplasmic-facing; sequence WGYRKCQHKSSVYKLNVGQRQARHYHQQIEMEKV.

It localises to the membrane. The sequence is that of Sushi domain-containing protein 5 (SUSD5) from Homo sapiens (Human).